Reading from the N-terminus, the 238-residue chain is uncharacterized protein (238 aa).

The chain crosses the membrane as a helical span at residues 10–33 (TLLALMISLSLSSLLLLSISHFYV).

The protein resides in the membrane. This is an uncharacterized protein from Haemophilus influenzae (strain ATCC 51907 / DSM 11121 / KW20 / Rd).